Here is a 186-residue protein sequence, read N- to C-terminus: MDALGLSKLRHLKPRQLLSQVLNFALILSTAFMLWKGLSVATDSPSPIVVVLSGSMEPAFQRGDLLFLWNRNLELDSPPTPGTRVGEIVVYNVIGKDIPIVHRVVRKHQGPKTPLHLLTKGDNNHADDTELYARGRWYLDREKEVIGSVVGYVPFVGYVTIMLSEHPWMKTALLGIMGLLVIVQRE.

Residues 1-20 (MDALGLSKLRHLKPRQLLSQ) lie on the Cytoplasmic side of the membrane. A helical; Signal-anchor for type II membrane protein transmembrane segment spans residues 21–41 (VLNFALILSTAFMLWKGLSVA). Residues 42–186 (TDSPSPIVVV…MGLLVIVQRE (145 aa)) lie on the Lumenal side of the membrane. Active-site charge relay system residues include Ser-55, His-102, and Asp-128. Positions 172-183 (ALLGIMGLLVIV) are C-terminal short (CTS) helix.

Belongs to the peptidase S26B family. Component of the signal peptidase complex (SPC) composed of a catalytic subunit SEC11 and three accessory subunits SPC1, SPC2 and SPC3. The complex induces a local thinning of the ER membrane which is used to measure the length of the signal peptide (SP) h-region of protein substrates. This ensures the selectivity of the complex towards h-regions shorter than 18-20 amino acids. SPC associates with the translocon complex.

Its subcellular location is the endoplasmic reticulum membrane. It catalyses the reaction Cleavage of hydrophobic, N-terminal signal or leader sequences from secreted and periplasmic proteins.. Its function is as follows. Catalytic component of the signal peptidase complex (SPC) which catalyzes the cleavage of N-terminal signal sequences from nascent proteins as they are translocated into the lumen of the endoplasmic reticulum. Specifically cleaves N-terminal signal peptides that contain a hydrophobic alpha-helix (h-region) shorter than 18-20 amino acids. The protein is Signal peptidase complex catalytic subunit SEC11 (SEC11) of Tuber melanosporum (strain Mel28) (Perigord black truffle).